A 6077-amino-acid chain; its full sequence is MAQQAQCLLPSFGTISDGPKRPVSITTKTTPSQSAKLLSAYKNDSLDPLLKTAWGLLLYRYTGLQDVCFGYKHDDAGALVSQTSDAGRLLTFRLTINEHDTIKTILEKSGGGYGCQTDIGVSGSSNANNDNYSSFNTVVMVRVCGDSTKEETFVRPVFQSILPEECRARLHVKVLQEDICIFLEWWNTDISTAQMESVARYFEHILNQVLYSDDTVVANADCFLEQDWARICKFNSVIPETYDRCIHDVISEQVRLHPQREAVCAWDGSFTYGELDVLASELSYRLKGYGVRPETFVALCFDKSKWNIVAMLGVLKAGGAFVPLDPTHPTPRLRSLVDSVNVNIMLCSRNRAEHLSKVVNNLIPLDEQSFGKISFPPRGYLRQEVKSNNAAYLIFTSGSTGKPKGTLLEHRAFVSCVFAYAPLIHGGCVCVPSEEERLNDIVQAINRMNVNFICLTPSFARFVNPSSIPQVNTALLVGEAMSRTDLEAWSHIKLLNGYGPTEAAVCAAINSTMDINSDCRDIGLATGTHFWVVKPNNHDQLVPVGCPGELLLEGPTLARCYINNPEKTDEVFIYNPTWARHDPKRGDRRFYKTGDLVRYNSDLGSLTFLGRKDSQIKLHGQRIELGEIEHNISTLPLVKHGMAFLCESGPAKGRLMAVVSLNGELSSNTVPFKLLPPAERTYAVTELRQQLSKRLPTYMIPAVWLCVEALPLLPSGKLNRREIISWATNKTDDFQGGASESSGVETPKAAHSEVTVEDRLKSIWSRVLAIPRDRISLDESFLALGGDSIAAITCMGYCKKQGMGVTVQDVLQSKSIRDLVTRVQEIKHLVKYQEETEEPFGLSPIQKLHFMIRKEGQGYFNQSVRTRLSRRLSADDLRHAIQVIIERHSMLRVRLIKDTLVGNLRQRITRDIDSSYRLRVHNINHQAQMESAISVSQSCINAFQGPIMAVDIFYTEDDCFLSMVAHHLAIDIVSWRIILEDLEDILLRSEDKTIYTSSLPFSTWCHLQDERTQTFGSYLEDLPIPDAAYWGVENRVATYGDAICETFELGLDDSKSILMECHKSLATEPVDILLASLLHAFGQTFRDRSLPAIYNEGHGREAWDSSIDISRTVGWFTTVFPIFIREQIPDDPVETVVLVKDIRRSVSDNGRQRFASLMSASTKDEKREFLCPMEISFNYVGQHRDLQRQDGLFQLMNQMAGETGQGGGASDFGKETPRFGLFEISALAVNGRLRFIFSFSKYMRHQKRIRAWIASCGDVLRSLGKRLQTHAKRPTLSDFPMLSLTYPDIESMLAKTLPSLGVSSPELIEDIYPCSRMQQGILLARSRDSSLYAVHDTYEVRGFNGKPDVARLAEAWRMVVSRHAMLRTLFVENLTSRDLFSQLVLRNCEPSILYLSCPTDDDVVSTFNSQRPEIYNEYQPHHRLTFCETASGRVFFRLELSHAAMDGVSISVILRDLQLAYDGKLDQNKPLFKNYIQYLRNTPQDASIVYWKNYLADVKPCLFPTLTDGKIIAQKQLKVLRPKFNLFNDLQTACEERRLTLSSAFTAAWGLTLSLFCGSNDVCFSYMTSLRDALVDDIESVVGPVINLLACRVKISEGDTLRDIMQKVQNDCMEQLAYNTLSLIDIVHELRLSEQALINTGISYQRVTKMQMHHTTGINLSRVCAIQDPAEYPLFVNVVASDKAAEIEVNYWTDTLSDEQAESVSSTFFKCLENIVRHLKEQVGQLEVLSDWNKQRIRKWNKQLPEEVDMLVQDIIQEKMASQPDKPAIIAWDGTLTYAELEYLSSCFAAYLQQLGVRRGTLMPIYVGKSVWQIVAILAVFKTGAICVPRDEAQLGDSVDKWLVDHGAHIVVTLPSLAGSLERQFPVVVPINKSLFEFLPSSSQENLPQVYPHDDSFIAFDSSDPHESSAVLDQRAIIARAASFASTINSNSGTKTFQYAPCTSDMFLQEVMGTFMSGGCLCIPRSDSLSQLSRSINETSANLICLTPLVASFIRPSDVPSIQVLVLFGEQSARNVRNIWSEKVQLYTFYGRTECSSTCIQVSGLDDLDTQSSIGTSVGCCSWVVDPQDFTRLVPVGCIGELVIEGPSVSRGYFCHEKQKKERFTEQDRGLMEPAKRPYTLFPGSRRKMFRTGYLVRYNADGTLVYLGEKVDSMDQTLQMIAFKIEQLLDVQGSAGYRCVAEILDLRIEEYPEPCIAVFILSTEKQQSNTIKQSTVIARKTNNSHMLMAKLHASLAASLPASQVPSLYFPVFGLPMTSLGKVNRPLLRKAVKSLSADSLTEYDLKKFGEFWRHQLEKPSLSGQHLLQPFPIQESPALKMVDKGELLVNAKESSNSAEQFLPQATMIPRRVQVNNSTSISGLLDQTASCLVKARPYEKTPLSSIRSLNADTSQASDFDSALSISSMTSQQQSQYLRSLENAERLHSRFSACPIVVFCALEETGVSLEIRYDDRAVYRSQADRLLALFGECLNIFKSTTGLEEKVADLSKRGGNLQIFNDTIDYWKVQLTDIESCLFPDLSPKKGESRLGTETLRLSNASKMQSACKALSINPNILLQTVWALVLRCYTGLEDVCFGYHVSTKKDSVNILPCRFNLNDDLRLQDVMQKRKEDMESASKYQMPLFEILRAIGSENSPIFNTAFRYRKSSSNAAVFNNAVLDPVNEGLNEYLISVNASVSGSSAEISFDYQSTSLSETDIGHIIDCFECILNSILTLLGPSRVIRDVEFFGRQSCQKVSAWNASLPERPKRCAHTIIQDRVIAQPSAPAICSWDENFTYSELDSLTTKLAYHLMDWGVGPEVFVGLCFEKSAWAVIAQVAVLKAGGAFASLDPAHPESRLRGLVDDIAAPIVLCSTRYLDKSSRICMAALAVSHYTLEQIPDSPATRSLPTLSVENAAYAIFTSGTTGKPKITVLEHAALDVASSCFAKTLGIDSNTRALQFSSYTFDVSILETIITLMTGGCVCTPSDDERMNDLAGAIKRMEANSISCTPSVISTLDPSSVPTLKTIFTGGEKLTEAQIMRWADRRFYNAYGPSEATIIATASLKVNRDGIRLDDDCNSIGTAVCGRAWIVDPYNHHRLLPVGAVGELVLEGYNIARGYLNNDKKTKEVFITLPRWLRDSGLRDVPKPTGRMYRTGDLVRYKSDKNISFISRMDTQVKLNGQRIELEEIEQQCTFISPANTQVAVDIVVPETKTVAKALAAFITIAGHEAQSATPGLGVSSSLLLPLSDSIQRTIGQLHNSLGQVLPQVMIPRLYFPVRYLPLGTTGKLDRKGLRAMVQALPKEQLISYMISNVGSGRAVERAAESTLRDLWAKALEIEPGSISAEDSFFALGGDSFAAMKLVGAARSQNISLSFATIYEHPVLVDMAKCCDDTEKPAERQRADLRPFTLVPGSIPLHDIMEEVSEQCSVTKDSIADIYPCTAVQEGLITLSIKSPGSYVARIPYRLAASIDLQRFKAAWQQVTDEFDILRTRIVHIENTGFLQVVLKKERISWTLETSLDNVTDDTAEGSGALLAKYAIVQLGTDSRYRQCLYKLFIHHLLQRDMQQSDEFWKSYLDGLSCEPFPPKKNKDLSCSGAGSIHRASVDISRKVGTTDTTVPELVRSAWAIVLSVHTGSGDVCFGETLMGRNIDMPGITDVVGPVLTTVPMRIRVDNKLPINQYLRDVRQIITTMIPHQHSGLQRIQKLSGDAALACNFQNLLVIQSDDSQLNDDIWSPVEQDTRGDFFTHPLVVQCQISGPRLLILANYDELVLDDWQTERLIGQFSFVLEQLLSVPRDSLMTVGDIDITGPLDKRDIASWNQRQVTCVNKCVHEIIRENAIMHPQATAICSWDGEITYEEMFQLASSFAAYLVICGVGPETLVPVCLGKSLWTMVTVLSVLLAGGAFVPLDPSHPTSRHKEILEEIEADMILCSPQLRSRYLGSVSTIIPVSEDTIKAYSTVTTSEKANASPTPENMAYAIFTSGSTGRPKGIIIEHRAVCSSVIGFAPVVGLNKESRVFQFASLTFDAAILEVLGTLMLGGCICVPSDDERLNDIPGAMQRMNVSWSFLTPSVACILEPSTVPSLQILTCGGEALSSEVVKKWTGHVKFYGGYGPTETVVFAVVARDFVDHDFTCIGYGVPSTLTWVVQPDDHDRLAPLGAVGELVLEGPALAREYLKNPSKTTDVFINEPAWIKSFPSSLPSPRRIYKTGDLVRYNPDGSIEYLGRKDHQVKLHGQRMELGEIEHRLLASENIRNAVVILPQKGPLRQKLVAVLSLKSLTVESSTIMTGSCELASQKDMLETGYRQIRTSQKSIEEQLPVYMVPQAWAVVKSIPMLVSGKLDRKRICTWLEQIDKSAYDRIMQDYDNVDQVIVEEENKGEREGDATPAIIRDIFAQVLNLPLNKVDPSRSFIYLGGDSISGMAVVSKARKRGLNLPLNRILQAKSIEELAVSCGTKPLPTKNVKESGSLFPLSPIQELFFRSASVLPKALGRFNQSITVRLARRTEPNVLEDAVRAVVQKHAMFRARFSKSSDGTWRQRITDEVDSSYKFCTHPVKNAGNMLSIIADTQSSLDIQRGPVIAADLFDKNGEQILFLVASHICVDVVSWRIVLQELEDFVDTGSIPSDVPLSFKSWCNVQFEESKRLNKSIEIPCQQADLNYWGMSRAPNNYGHVKMDSFALDKQATAFISGHFHEILGTETMEVLLAAVMYSFNRVFPDRDAPTIYNEGHGREPWNYSDPSGTIGWFTTLNPLHVEASSDLLELLKQVKDTRRRISEHSRAFFAHNVLHSDSTDRTHMFSIPLEILFNYLGQLQQLERGGSTFQHYGDVFSAETMDSASDMGPETPRFSLFEITALILKEQLHISFTYNRNMRHQARIQAWMAECKRVLEVELPKFRNVAPQPTLSDYPLLPITYHGLEELTASVLPRLGLESWRQVEDIYPCSPVQEGILFSQLRDPHEYIFNAIFELRQSGNKGSFDLARLKKAWSTVVVRHPVLRTVFIDSCCEEGSFDQVVLKEASDATVLIECDDLDALNKLEAVSLRSNKSLNLYHQLVLCKTSTGRVLMKLEMNHVIIDGGSTSILLRELALAYSNQHPPGPGPLFSEYIKYLREQPTAEALEYWKRRLSDMPPCHLPINASENGARQLGTHLVAFNRFAALQSFCEANSITFANLILAVWAIVLRSHTKSDDVCFGYPSTGRDLPVPGIQDAVGIFINTLCCRVRFDTNQTLKGTVKSVQEDHIASLAYQRSSLAEIQHALGRKGEPLFNTCISIQNRSEDKTEIAGISYEFQKAHDPCEMLGKGKPVTSWVKSHGAESPSDFPDIRNDVEESLQDLVVMMEKTPASSTQTLNTDYRAPNDSEKQLWRLWSITLGLPPHPVKYHDSFFRLGGDSITAMRLVRAARDEGLKLSVADVLKNPVFENMMALINDRKKSIPTTVTEKRADSIEKRVEDKPILTKCESSQDISILRPMSLEFDDTSLRAAISPKVGVFKGGIVDVLPVTDFQALSLTATMFESRWMLNYFYLDGKGSLDIRRLRESFLRVVDAFDILRTVFVCFHGQFYQVVLRKIKPDIFVHETEKGLDEYTNSLQQRDREQSPGQGQQCVQFYVVRKTNSDEHRILVRMSHAQFDGVCLSKIMTAIKMAYEGSPVSPSSFLNYMRLLPGNITPEHYQHWGNLLKGSKMTQIVQRDRPNTFQHIGGFTQQSKVIEIPSTATENVTIATVMQSAWAVTLAKICAQDDVVFGLTVNGRNAVPGAENTIGPCLNFIPIRVTFKDCWTGLDLFRFLQDQQVANMTYESLGFREIVRRCTDWPESTFFTTSVLHQNVDYEGHMQLDNNTYKMGGVGVIDNLTDLTLFSKPVAGQPAQINVALGYSTKGPIHPSFVSTVLDMVCDTAQSLVANPNVALPSPSTIRSLPPQLVEDIPTTGSTDSLLSSLNNHSLSEILVHSDLITRIWQQVLPPKLNTGKPPSSYQLDSSFFGLGGDIVNVAQVVWILEQETGLHIRLEDLLAHSTFLGHMAVLALNMTKRDSAGVDSDAAPAPAYAPVDARASRNVSTSRQQQEGLPLPAANAKSEWSALDRARVLAKKITRLGGLGTRV.

An adenylation 1 region spans residues 417–618 (VFAYAPLIHG…LGRKDSQIKL (202 aa)). A Carrier 1 domain is found at 751–827 (HSEVTVEDRL…DLVTRVQEIK (77 aa)). S788 is subject to O-(pantetheine 4'-phosphoryl)serine. Condensation regions lie at residues 842–1267 (LSPI…GKRL) and 1309–1737 (EDIY…KQRI). Adenylation stretches follow at residues 1757–2149 (QEKM…YLGE) and 2755–3157 (DRVI…QVKL). The 77-residue stretch at 3297 to 3373 (AVERAAESTL…DMAKCCDDTE (77 aa)) folds into the Carrier 2 domain. An O-(pantetheine 4'-phosphoryl)serine modification is found at S3334. The interval 3524–3779 (DSRYRQCLYK…LLSVPRDSLM (256 aa)) is condensation 3. Residues 3816–4213 (ENAIMHPQAT…LGRKDHQVKL (398 aa)) form an adenylation 4 region. Residues 4361 to 4437 (REGDATPAII…ELAVSCGTKP (77 aa)) enclose the Carrier 3 domain. S4398 carries the post-translational modification O-(pantetheine 4'-phosphoryl)serine. 2 condensation regions span residues 4451-4869 (PLSP…RVLE) and 4916-5260 (VEDI…EDKT). One can recognise a Carrier 4 domain in the interval 5334-5410 (RAPNDSEKQL…NMMALINDRK (77 aa)). S5371 carries the post-translational modification O-(pantetheine 4'-phosphoryl)serine. The segment at 5476–5885 (DVLPVTDFQA…SLVANPNVAL (410 aa)) is condensation 6. The 84-residue stretch at 5921–6004 (SEILVHSDLI…GHMAVLALNM (84 aa)) folds into the Carrier 5 domain. Positions 6013-6027 (DSDAAPAPAYAPVDA) are enriched in low complexity. The tract at residues 6013–6047 (DSDAAPAPAYAPVDARASRNVSTSRQQQEGLPLPA) is disordered. Polar residues predominate over residues 6031–6041 (RNVSTSRQQQE).

Belongs to the NRP synthetase family.

It functions in the pathway secondary metabolite biosynthesis. Functionally, nonribosomal peptide synthetase involved in the synthesis of nidulanin A and derived compounds. Nidulanin A is a tetracyclopeptide with the sequence L-Phe-L-Kyn-L-Val-D-Val and an isoprene unit N-linked to the amino group of L-kynurenine. The NRPS nlsA is responsible of the synthesis of the cyclopeptide and the prenyltransferase nptA adds the isoprene unit on the L-kynurenine residue of nidulanin A. Further modifications lead to additional oxygenated related compounds. In Emericella nidulans (strain FGSC A4 / ATCC 38163 / CBS 112.46 / NRRL 194 / M139) (Aspergillus nidulans), this protein is Nonribosomal peptide synthetase nlsA.